Reading from the N-terminus, the 407-residue chain is MSIENKNTGVKKVVLAYSGGLDTSAIIPWLKETYDNCEIIAFCADVGQGEEELVGLTEKALASGASECHIVDLKEEFVKDYIYPTMATGAIYEGTYLLGTSMARPIIAKAQVEVARKVGADALCHGCTGKGNDQVRFEGCFAALAPDLKVIAPWREWTMQSREDLLAYLAERNIKTSASATKIYSRDANAFHISHEGGELEDPWNEPSKGVWTLTADPEDAPNQAEYVSLEVEHGRVTKVNGEALTPYAALMKLNAIAAPHGVGRIDITENRLVGMKSRGCYETPGGTVMFAALRAIEELVLDKTSRTWREQVGAQMAHLVYDGRWFTPLCKSLLAASESLAESVNGEVVVKLYKGHAIAVKKRSPNSLYSEAFATFGEDQVYDQKHAEGFIRLYSLASRIRALNAK.

Residues 16–24 (AYSGGLDTS) and Ala-44 contribute to the ATP site. Residues Tyr-96 and Ser-101 each contribute to the L-citrulline site. Position 126 (Gly-126) interacts with ATP. Thr-128, Asn-132, and Asp-133 together coordinate L-aspartate. Residue Asn-132 coordinates L-citrulline. L-citrulline is bound by residues Arg-136, Ser-185, Ser-194, Glu-270, and Tyr-282.

Belongs to the argininosuccinate synthase family. Type 1 subfamily. As to quaternary structure, homotetramer.

It localises to the cytoplasm. It catalyses the reaction L-citrulline + L-aspartate + ATP = 2-(N(omega)-L-arginino)succinate + AMP + diphosphate + H(+). The protein operates within amino-acid biosynthesis; L-arginine biosynthesis; L-arginine from L-ornithine and carbamoyl phosphate: step 2/3. The polypeptide is Argininosuccinate synthase (Shewanella sp. (strain ANA-3)).